The chain runs to 321 residues: tRNA U34 carboxymethyltransferase (321 aa).

Carboxy-S-adenosyl-L-methionine-binding positions include lysine 90, tryptophan 104, lysine 109, glycine 129, aspartate 151 to threonine 153, isoleucine 180 to glutamate 181, methionine 195, tyrosine 199, and arginine 314.

This sequence belongs to the class I-like SAM-binding methyltransferase superfamily. CmoB family. In terms of assembly, homotetramer.

It catalyses the reaction carboxy-S-adenosyl-L-methionine + 5-hydroxyuridine(34) in tRNA = 5-carboxymethoxyuridine(34) in tRNA + S-adenosyl-L-homocysteine + H(+). In terms of biological role, catalyzes carboxymethyl transfer from carboxy-S-adenosyl-L-methionine (Cx-SAM) to 5-hydroxyuridine (ho5U) to form 5-carboxymethoxyuridine (cmo5U) at position 34 in tRNAs. This Pasteurella multocida (strain Pm70) protein is tRNA U34 carboxymethyltransferase.